We begin with the raw amino-acid sequence, 235 residues long: Putative N-acetylmannosamine-6-phosphate 2-epimerase (235 aa).

The protein belongs to the NanE family.

It carries out the reaction an N-acyl-D-glucosamine 6-phosphate = an N-acyl-D-mannosamine 6-phosphate. It functions in the pathway amino-sugar metabolism; N-acetylneuraminate degradation; D-fructose 6-phosphate from N-acetylneuraminate: step 3/5. Its function is as follows. Converts N-acetylmannosamine-6-phosphate (ManNAc-6-P) to N-acetylglucosamine-6-phosphate (GlcNAc-6-P). The polypeptide is Putative N-acetylmannosamine-6-phosphate 2-epimerase (Aliivibrio fischeri (strain ATCC 700601 / ES114) (Vibrio fischeri)).